Here is a 336-residue protein sequence, read N- to C-terminus: Cycloartenol-C-24-methyltransferase (336 aa).

Met1 is modified (N-acetylmethionine).

Belongs to the class I-like SAM-binding methyltransferase superfamily. Erg6/SMT family. Highly expressed in vascular tissue, mature leaves and in regions undergoing cellular expansion.

It catalyses the reaction cycloartenol + S-adenosyl-L-methionine = 24-methylenecycloartanol + S-adenosyl-L-homocysteine + H(+). It functions in the pathway steroid biosynthesis; sterol biosynthesis. Its function is as follows. Catalyzes the methyl transfer from S-adenosyl-methionine to the C-24 of cycloartenol to form 24-methylene cycloartenol. The protein is Cycloartenol-C-24-methyltransferase (SMT1) of Arabidopsis thaliana (Mouse-ear cress).